A 66-amino-acid chain; its full sequence is Photosystem II reaction center protein J (66 aa).

A disordered region spans residues 1–23; the sequence is MSGNKSPFPDGRIPDRLPDGRPA. The chain crosses the membrane as a helical span at residues 37–57; the sequence is LWLVATAGGMAVLFVVGLFFY.

Belongs to the PsbJ family. As to quaternary structure, PSII is composed of 1 copy each of membrane proteins PsbA, PsbB, PsbC, PsbD, PsbE, PsbF, PsbH, PsbI, PsbJ, PsbK, PsbL, PsbM, PsbT, PsbX, PsbY, PsbZ, Psb30/Ycf12, peripheral proteins PsbO, CyanoQ (PsbQ), PsbU, PsbV and a large number of cofactors. It forms dimeric complexes.

The protein resides in the cellular thylakoid membrane. In terms of biological role, one of the components of the core complex of photosystem II (PSII). PSII is a light-driven water:plastoquinone oxidoreductase that uses light energy to abstract electrons from H(2)O, generating O(2) and a proton gradient subsequently used for ATP formation. It consists of a core antenna complex that captures photons, and an electron transfer chain that converts photonic excitation into a charge separation. The sequence is that of Photosystem II reaction center protein J from Parasynechococcus marenigrum (strain WH8102).